A 329-amino-acid chain; its full sequence is Secretory carrier-associated membrane protein 2 (329 aa).

A disordered region spans residues 1–74 (MSAFDTNPFA…PSVEPAQPTP (74 aa)). The Cytoplasmic portion of the chain corresponds to 1–153 (MSAFDTNPFA…DYQRICKMLY (153 aa)). 2 stretches are compositionally biased toward polar residues: residues 19 to 31 (QDPS…NAPQ) and 40 to 51 (FSETNAATTVPA). A helical membrane pass occupies residues 154–174 (YLWMLHSVTLFLNLLACLAWF). The Lumenal segment spans residues 175–181 (TSDAANG). Residues 182-202 (TAFGLSILWFLIFTPCAFLCW) form a helical membrane-spanning segment. Topologically, residues 203–218 (YRPIYKAFRSDNSFSF) are cytoplasmic. An interaction with SLC9A7 region spans residues 203 to 218 (YRPIYKAFRSDNSFSF). A helical transmembrane segment spans residues 219 to 239 (FVFFFVFFCQIGIYFIQLIGL). Topologically, residues 240–262 (PNLGTSGWLAALSTMKNGPLAVT) are lumenal. The chain crosses the membrane as a helical span at residues 263-283 (IIMMVVAGFFTLCAGLSLFLL). Residues 284 to 329 (QRVHAFYRRTGASFQQAQEEFSQGIFSSRTFRGAASSAARGAFQGN) lie on the Cytoplasmic side of the membrane. S319 and S320 each carry phosphoserine.

This sequence belongs to the SCAMP family. Interacts with SLC6A4 and SLC9A7. Interacts with SLC9A5; this interaction regulates SLC9A5 cell-surface targeting and SLC9A5 activity.

It localises to the golgi apparatus. It is found in the trans-Golgi network membrane. Its subcellular location is the recycling endosome membrane. Its function is as follows. Functions in post-Golgi recycling pathways. Acts as a recycling carrier to the cell surface. The chain is Secretory carrier-associated membrane protein 2 (Scamp2) from Mus musculus (Mouse).